A 279-amino-acid chain; its full sequence is uncharacterized protein (279 aa).

Composition is skewed to low complexity over residues 1 to 25 (MNEN…NNNN), 86 to 151 (PSQS…NGNN), and 232 to 250 (NKNN…DDNN). Disordered stretches follow at residues 1–27 (MNEN…NNIK), 83–153 (NLFP…NNID), and 213–260 (QSVN…KVKS).

This is an uncharacterized protein from Dictyostelium discoideum (Social amoeba).